The sequence spans 104 residues: uncharacterized protein (104 aa).

Residues 72-92 (LIFSHNIVIIVSPIYMISFII) form a helical membrane-spanning segment.

Its subcellular location is the membrane. This is an uncharacterized protein from Saccharomyces cerevisiae (strain ATCC 204508 / S288c) (Baker's yeast).